A 165-amino-acid polypeptide reads, in one-letter code: SsrA-binding protein (165 aa).

This sequence belongs to the SmpB family.

The protein localises to the cytoplasm. Functionally, required for rescue of stalled ribosomes mediated by trans-translation. Binds to transfer-messenger RNA (tmRNA), required for stable association of tmRNA with ribosomes. tmRNA and SmpB together mimic tRNA shape, replacing the anticodon stem-loop with SmpB. tmRNA is encoded by the ssrA gene; the 2 termini fold to resemble tRNA(Ala) and it encodes a 'tag peptide', a short internal open reading frame. During trans-translation Ala-aminoacylated tmRNA acts like a tRNA, entering the A-site of stalled ribosomes, displacing the stalled mRNA. The ribosome then switches to translate the ORF on the tmRNA; the nascent peptide is terminated with the 'tag peptide' encoded by the tmRNA and targeted for degradation. The ribosome is freed to recommence translation, which seems to be the essential function of trans-translation. This is SsrA-binding protein from Prochlorococcus marinus (strain MIT 9515).